A 150-amino-acid chain; its full sequence is Nucleoside diphosphate kinase (150 aa).

ATP is bound by residues Lys9, Phe57, Arg85, Thr91, Arg102, and Asn112. His115 acts as the Pros-phosphohistidine intermediate in catalysis.

Belongs to the NDK family. In terms of assembly, homotetramer. Mg(2+) serves as cofactor.

The protein resides in the cytoplasm. It carries out the reaction a 2'-deoxyribonucleoside 5'-diphosphate + ATP = a 2'-deoxyribonucleoside 5'-triphosphate + ADP. It catalyses the reaction a ribonucleoside 5'-diphosphate + ATP = a ribonucleoside 5'-triphosphate + ADP. Its function is as follows. Major role in the synthesis of nucleoside triphosphates other than ATP. The ATP gamma phosphate is transferred to the NDP beta phosphate via a ping-pong mechanism, using a phosphorylated active-site intermediate. This chain is Nucleoside diphosphate kinase, found in Staphylococcus carnosus (strain TM300).